Consider the following 325-residue polypeptide: Phenylalanine--tRNA ligase alpha subunit (325 aa).

E251 is a Mg(2+) binding site.

It belongs to the class-II aminoacyl-tRNA synthetase family. Phe-tRNA synthetase alpha subunit type 1 subfamily. In terms of assembly, tetramer of two alpha and two beta subunits. Mg(2+) serves as cofactor.

The protein localises to the cytoplasm. It carries out the reaction tRNA(Phe) + L-phenylalanine + ATP = L-phenylalanyl-tRNA(Phe) + AMP + diphosphate + H(+). The protein is Phenylalanine--tRNA ligase alpha subunit of Thermotoga petrophila (strain ATCC BAA-488 / DSM 13995 / JCM 10881 / RKU-1).